We begin with the raw amino-acid sequence, 328 residues long: Phosphate acyltransferase (328 aa).

Belongs to the PlsX family. In terms of assembly, homodimer. Probably interacts with PlsY.

It is found in the cytoplasm. It catalyses the reaction a fatty acyl-[ACP] + phosphate = an acyl phosphate + holo-[ACP]. It functions in the pathway lipid metabolism; phospholipid metabolism. Its function is as follows. Catalyzes the reversible formation of acyl-phosphate (acyl-PO(4)) from acyl-[acyl-carrier-protein] (acyl-ACP). This enzyme utilizes acyl-ACP as fatty acyl donor, but not acyl-CoA. The chain is Phosphate acyltransferase from Campylobacter jejuni subsp. doylei (strain ATCC BAA-1458 / RM4099 / 269.97).